The primary structure comprises 306 residues: Elongation factor Ts (306 aa).

Positions 79-82 (TDFV) are involved in Mg(2+) ion dislocation from EF-Tu.

This sequence belongs to the EF-Ts family.

The protein localises to the cytoplasm. Its function is as follows. Associates with the EF-Tu.GDP complex and induces the exchange of GDP to GTP. It remains bound to the aminoacyl-tRNA.EF-Tu.GTP complex up to the GTP hydrolysis stage on the ribosome. This Mesorhizobium japonicum (strain LMG 29417 / CECT 9101 / MAFF 303099) (Mesorhizobium loti (strain MAFF 303099)) protein is Elongation factor Ts.